Consider the following 414-residue polypeptide: Multifunctional CCA protein (414 aa).

ATP contacts are provided by Gly-8 and Arg-11. Positions 8 and 11 each coordinate CTP. 2 residues coordinate Mg(2+): Asp-21 and Asp-23. ATP is bound by residues Arg-91, Arg-143, and Arg-146. The CTP site is built by Arg-91, Arg-143, and Arg-146. The HD domain maps to Thr-232 to Leu-333.

It belongs to the tRNA nucleotidyltransferase/poly(A) polymerase family. Bacterial CCA-adding enzyme type 1 subfamily. Monomer. Can also form homodimers and oligomers. Mg(2+) serves as cofactor. Ni(2+) is required as a cofactor.

The enzyme catalyses a tRNA precursor + 2 CTP + ATP = a tRNA with a 3' CCA end + 3 diphosphate. It carries out the reaction a tRNA with a 3' CCA end + 2 CTP + ATP = a tRNA with a 3' CCACCA end + 3 diphosphate. Functionally, catalyzes the addition and repair of the essential 3'-terminal CCA sequence in tRNAs without using a nucleic acid template. Adds these three nucleotides in the order of C, C, and A to the tRNA nucleotide-73, using CTP and ATP as substrates and producing inorganic pyrophosphate. tRNA 3'-terminal CCA addition is required both for tRNA processing and repair. Also involved in tRNA surveillance by mediating tandem CCA addition to generate a CCACCA at the 3' terminus of unstable tRNAs. While stable tRNAs receive only 3'-terminal CCA, unstable tRNAs are marked with CCACCA and rapidly degraded. The protein is Multifunctional CCA protein of Cupriavidus metallidurans (strain ATCC 43123 / DSM 2839 / NBRC 102507 / CH34) (Ralstonia metallidurans).